Reading from the N-terminus, the 530-residue chain is MSGPALEVAAAKTAEQGQVPVLAAAVRGDTKVSGDSIHAATTAVSDGDNQSSTMSGKTAAGDATSPASGSGSGGWFHWHEPGTSKAEKKLIFKLDWFLLSYSCLCFFIKQLDGNNVTNAYASGMQEQLGFGPGNELSWMNTYFNIGQIIGAPFANMIITVVRPRYWLPACLMTWSAFVLGMYRCETAAQFYVLRFFIGLFEGAAWPGITYTLGCWYRKSEMARRSALFVMSGVLGQMFSGYLQAALYTGMDGKGGLAAWRWLFIFDFILAVPIAIYGLFCFPDTPHKTSAWYLNSWEREKAVERIDSEGRKPIGKLDLSVFKRIFTSWQVYAFTLGYALWSLTVGSYVMQYFTLYLKATKEYTIPQINNIPTALGAVNFVTMLTTGFVSDKIGRRGPVCLAVGCVLIFTYSIFTAWNVPHRLLMAVFILNGVYGCYTPLLAGWVNECCGGDQQKRAFILGLMTSVGGAVVIPFQQLQFPSSQAPQFKQTHGWPSALAFVIALTCWTGLGIPLLQRRMEKQAKRNEAEHEA.

The disordered stretch occupies residues 41–76 (TTAVSDGDNQSSTMSGKTAAGDATSPASGSGSGGWF). A compositionally biased stretch (polar residues) spans 42–56 (TAVSDGDNQSSTMSG). Residues 59-69 (AAGDATSPASG) show a composition bias toward low complexity. The next 10 membrane-spanning stretches (helical) occupy residues 165-182 (YWLP…LGMY), 195-215 (FFIG…LGCW), 226-246 (ALFV…QAAL), 261-281 (WLFI…LFCF), 324-344 (IFTS…SLTV), 369-389 (NIPT…GFVS), 396-416 (GPVC…FTAW), 422-442 (LLMA…LLAG), 456-476 (AFIL…FQQL), and 493-513 (PSAL…IPLL).

The protein belongs to the major facilitator superfamily. Allantoate permease family.

It localises to the cell membrane. In terms of biological role, MFS transporter; part of the gene cluster that mediates the biosynthesis of dihydroxynaphthalene (DHN)-melanin, a bluish-green pigment forming a dark layer in the conidial wall that protects the conidia from UV radiations. The chain is MFS transporter PfmaC from Pestalotiopsis fici (strain W106-1 / CGMCC3.15140).